The sequence spans 134 residues: Cytochrome b (134 aa).

The next 3 membrane-spanning stretches (helical) occupy residues 33-53 (FGSL…FLAM), 77-98 (WLLR…YLHV), and 113-133 (WNVG…GYVL). 2 residues coordinate heme b: histidine 83 and histidine 97.

This sequence belongs to the cytochrome b family. As to quaternary structure, the cytochrome bc1 complex contains 11 subunits: 3 respiratory subunits (MT-CYB, CYC1 and UQCRFS1), 2 core proteins (UQCRC1 and UQCRC2) and 6 low-molecular weight proteins (UQCRH/QCR6, UQCRB/QCR7, UQCRQ/QCR8, UQCR10/QCR9, UQCR11/QCR10 and a cleavage product of UQCRFS1). This cytochrome bc1 complex then forms a dimer. Heme b is required as a cofactor.

The protein localises to the mitochondrion inner membrane. Component of the ubiquinol-cytochrome c reductase complex (complex III or cytochrome b-c1 complex) that is part of the mitochondrial respiratory chain. The b-c1 complex mediates electron transfer from ubiquinol to cytochrome c. Contributes to the generation of a proton gradient across the mitochondrial membrane that is then used for ATP synthesis. The polypeptide is Cytochrome b (MT-CYB) (Chiroderma trinitatum (Little big-eyed bat)).